The chain runs to 583 residues: Aspartate--tRNA ligase (583 aa).

E174 is a binding site for L-aspartate. The aspartate stretch occupies residues 198 to 201 (QITK). R220 is a binding site for L-aspartate. Residues 220–222 (RDE) and Q229 contribute to the ATP site. Position 443 (H443) interacts with L-aspartate. Position 477 (E477) interacts with ATP. R484 lines the L-aspartate pocket. 529–532 (GLDR) lines the ATP pocket.

It belongs to the class-II aminoacyl-tRNA synthetase family. Type 1 subfamily. As to quaternary structure, homodimer.

Its subcellular location is the cytoplasm. It carries out the reaction tRNA(Asp) + L-aspartate + ATP = L-aspartyl-tRNA(Asp) + AMP + diphosphate. Catalyzes the attachment of L-aspartate to tRNA(Asp) in a two-step reaction: L-aspartate is first activated by ATP to form Asp-AMP and then transferred to the acceptor end of tRNA(Asp). The polypeptide is Aspartate--tRNA ligase (Streptococcus agalactiae serotype Ia (strain ATCC 27591 / A909 / CDC SS700)).